Consider the following 203-residue polypeptide: Ribosome maturation factor RimP (203 aa).

A disordered region spans residues arginine 184–histidine 203.

It belongs to the RimP family.

The protein resides in the cytoplasm. In terms of biological role, required for maturation of 30S ribosomal subunits. This is Ribosome maturation factor RimP from Methylobacterium nodulans (strain LMG 21967 / CNCM I-2342 / ORS 2060).